The primary structure comprises 90 residues: Small ribosomal subunit protein uS15c (90 aa).

In terms of assembly, component of the chloroplast small ribosomal subunit (SSU). Mature 70S chloroplast ribosomes of higher plants consist of a small (30S) and a large (50S) subunit. The 30S small subunit contains 1 molecule of ribosomal RNA (16S rRNA) and 24 different proteins. The 50S large subunit contains 3 rRNA molecules (23S, 5S and 4.5S rRNA) and 33 different proteins.

It localises to the plastid. The protein localises to the chloroplast. Its function is as follows. Component of the chloroplast ribosome (chloro-ribosome), a dedicated translation machinery responsible for the synthesis of chloroplast genome-encoded proteins, including proteins of the transcription and translation machinery and components of the photosynthetic apparatus. This chain is Small ribosomal subunit protein uS15c (rps15), found in Spinacia oleracea (Spinach).